A 194-amino-acid polypeptide reads, in one-letter code: Crossover junction endodeoxyribonuclease RuvC (194 aa).

Catalysis depends on residues Asp-7, Glu-68, and Asp-141. Asp-7, Glu-68, and Asp-141 together coordinate Mg(2+).

Belongs to the RuvC family. As to quaternary structure, homodimer which binds Holliday junction (HJ) DNA. The HJ becomes 2-fold symmetrical on binding to RuvC with unstacked arms; it has a different conformation from HJ DNA in complex with RuvA. In the full resolvosome a probable DNA-RuvA(4)-RuvB(12)-RuvC(2) complex forms which resolves the HJ. Mg(2+) is required as a cofactor.

It localises to the cytoplasm. The enzyme catalyses Endonucleolytic cleavage at a junction such as a reciprocal single-stranded crossover between two homologous DNA duplexes (Holliday junction).. The RuvA-RuvB-RuvC complex processes Holliday junction (HJ) DNA during genetic recombination and DNA repair. Endonuclease that resolves HJ intermediates. Cleaves cruciform DNA by making single-stranded nicks across the HJ at symmetrical positions within the homologous arms, yielding a 5'-phosphate and a 3'-hydroxyl group; requires a central core of homology in the junction. The consensus cleavage sequence is 5'-(A/T)TT(C/G)-3'. Cleavage occurs on the 3'-side of the TT dinucleotide at the point of strand exchange. HJ branch migration catalyzed by RuvA-RuvB allows RuvC to scan DNA until it finds its consensus sequence, where it cleaves and resolves the cruciform DNA. The polypeptide is Crossover junction endodeoxyribonuclease RuvC (Mycolicibacterium vanbaalenii (strain DSM 7251 / JCM 13017 / BCRC 16820 / KCTC 9966 / NRRL B-24157 / PYR-1) (Mycobacterium vanbaalenii)).